A 78-amino-acid polypeptide reads, in one-letter code: Biotin synthase auxiliary protein (78 aa).

Belongs to the BsaP family. The cofactor is iron-sulfur cluster.

Functionally, required for the activity of the biotin synthase BioB. This chain is Biotin synthase auxiliary protein, found in Mycolicibacterium smegmatis (strain ATCC 700084 / mc(2)155) (Mycobacterium smegmatis).